Consider the following 343-residue polypeptide: Ribosomal RNA small subunit methyltransferase C (343 aa).

It belongs to the methyltransferase superfamily. RsmC family. Monomer.

Its subcellular location is the cytoplasm. It carries out the reaction guanosine(1207) in 16S rRNA + S-adenosyl-L-methionine = N(2)-methylguanosine(1207) in 16S rRNA + S-adenosyl-L-homocysteine + H(+). Specifically methylates the guanine in position 1207 of 16S rRNA in the 30S particle. This chain is Ribosomal RNA small subunit methyltransferase C, found in Escherichia coli (strain SMS-3-5 / SECEC).